A 718-amino-acid polypeptide reads, in one-letter code: Probable GTP diphosphokinase RSH2, chloroplastic (718 aa).

Residues 1–68 constitute a chloroplast transit peptide; the sequence is MSVPAIAVYT…LFSSPTAAPR (68 aa). Positions 9 to 48 are disordered; sequence YTSPPGAVYTSSSSSELEASSRGSAPCATAAPPSPASSHR. The span at 19–39 shows a compositional bias: low complexity; that stretch reads SSSSSELEASSRGSAPCATAA. The 105-residue stretch at 243-347 folds into the HD domain; it reads YLQHCVETAV…IKLADRLHNM (105 aa).

Belongs to the RelA/SpoT family.

It is found in the plastid. The protein localises to the chloroplast. It catalyses the reaction GTP + ATP = guanosine 3'-diphosphate 5'-triphosphate + AMP. Its function is as follows. Probable ppGpp (guanosine 3'-diphosphate 5'-diphosphate) synthetase that may be involved in a rapid plant ppGpp-mediated response to pathogens and other stresses. The polypeptide is Probable GTP diphosphokinase RSH2, chloroplastic (RSH2) (Oryza sativa subsp. japonica (Rice)).